Here is a 168-residue protein sequence, read N- to C-terminus: Large ribosomal subunit protein uL10 (168 aa).

This sequence belongs to the universal ribosomal protein uL10 family. Part of the ribosomal stalk of the 50S ribosomal subunit. The N-terminus interacts with L11 and the large rRNA to form the base of the stalk. The C-terminus forms an elongated spine to which L12 dimers bind in a sequential fashion forming a multimeric L10(L12)X complex.

In terms of biological role, forms part of the ribosomal stalk, playing a central role in the interaction of the ribosome with GTP-bound translation factors. This Ralstonia pickettii (strain 12J) protein is Large ribosomal subunit protein uL10.